The chain runs to 521 residues: tRNA (adenine(58)-N(1))-methyltransferase non-catalytic subunit trm6 (521 aa).

Disordered stretches follow at residues 1–24 (METE…NNNN), 305–336 (IYDK…AKTI), and 452–521 (QKST…KIDE). Low complexity predominate over residues 12 to 24 (KSTTSNTNDNNNN). Positions 308-334 (KQVKEKEKEKEKDENVKDEKESGEEAK) are enriched in basic and acidic residues. Low complexity-rich tracts occupy residues 452–476 (QKST…TKTT) and 487–502 (DATT…AATT). Basic and acidic residues predominate over residues 510–521 (SESALKKRKIDE).

It belongs to the TRM6/GCD10 family. Heterotetramer; composed of two copies of trmt6 and two copies of trmt61a.

It is found in the nucleus. Its function is as follows. Substrate-binding subunit of tRNA (adenine-N(1)-)-methyltransferase, which catalyzes the formation of N(1)-methyladenine at position 58 (m1A58) in initiator methionyl-tRNA. The sequence is that of tRNA (adenine(58)-N(1))-methyltransferase non-catalytic subunit trm6 (trmt6) from Dictyostelium discoideum (Social amoeba).